Reading from the N-terminus, the 178-residue chain is Chorion class high-cysteine HCB protein 13 (178 aa).

The N-terminal stretch at 1 to 21 (MAAKLILFVCAIALVAQSVLG) is a signal peptide. The left arm stretch occupies residues 22–46 (TGCGCCCRGCGCGCGGCGSRCCDRF). Positions 47–110 (CLCSNSAAPT…GDGCVGITQS (64 aa)) are central domain. A right arm (Gly-rich tandem repeats) region spans residues 111–178 (CGGCGCGCGG…GCGCGGCGCC (68 aa)).

Belongs to the chorion protein family.

Its function is as follows. This protein is one of many from the eggshell of the silk moth. In Bombyx mori (Silk moth), this protein is Chorion class high-cysteine HCB protein 13.